We begin with the raw amino-acid sequence, 338 residues long: Holliday junction branch migration complex subunit RuvB (338 aa).

Residues 1-181 form a large ATPase domain (RuvB-L) region; the sequence is MTTRTISPEK…FGVISRLEFY (181 aa). Residues L20, R21, G62, K65, T66, T67, 128–130, R171, Y181, and R218 contribute to the ATP site; that span reads EDF. T66 contacts Mg(2+). The small ATPAse domain (RuvB-S) stretch occupies residues 182-252; sequence TDAELSTIVT…VVDESLKLLE (71 aa). Residues 255 to 338 are head domain (RuvB-H); the sequence is EKGFDQMDRT…APAPGQGALF (84 aa). Positions 291, 310, and 315 each coordinate DNA.

This sequence belongs to the RuvB family. As to quaternary structure, homohexamer. Forms an RuvA(8)-RuvB(12)-Holliday junction (HJ) complex. HJ DNA is sandwiched between 2 RuvA tetramers; dsDNA enters through RuvA and exits via RuvB. An RuvB hexamer assembles on each DNA strand where it exits the tetramer. Each RuvB hexamer is contacted by two RuvA subunits (via domain III) on 2 adjacent RuvB subunits; this complex drives branch migration. In the full resolvosome a probable DNA-RuvA(4)-RuvB(12)-RuvC(2) complex forms which resolves the HJ.

The protein localises to the cytoplasm. The enzyme catalyses ATP + H2O = ADP + phosphate + H(+). In terms of biological role, the RuvA-RuvB-RuvC complex processes Holliday junction (HJ) DNA during genetic recombination and DNA repair, while the RuvA-RuvB complex plays an important role in the rescue of blocked DNA replication forks via replication fork reversal (RFR). RuvA specifically binds to HJ cruciform DNA, conferring on it an open structure. The RuvB hexamer acts as an ATP-dependent pump, pulling dsDNA into and through the RuvAB complex. RuvB forms 2 homohexamers on either side of HJ DNA bound by 1 or 2 RuvA tetramers; 4 subunits per hexamer contact DNA at a time. Coordinated motions by a converter formed by DNA-disengaged RuvB subunits stimulates ATP hydrolysis and nucleotide exchange. Immobilization of the converter enables RuvB to convert the ATP-contained energy into a lever motion, pulling 2 nucleotides of DNA out of the RuvA tetramer per ATP hydrolyzed, thus driving DNA branch migration. The RuvB motors rotate together with the DNA substrate, which together with the progressing nucleotide cycle form the mechanistic basis for DNA recombination by continuous HJ branch migration. Branch migration allows RuvC to scan DNA until it finds its consensus sequence, where it cleaves and resolves cruciform DNA. The chain is Holliday junction branch migration complex subunit RuvB from Geobacter sulfurreducens (strain ATCC 51573 / DSM 12127 / PCA).